The chain runs to 363 residues: Chalcone synthase B (363 aa).

The active site involves cysteine 170.

This sequence belongs to the thiolase-like superfamily. Chalcone/stilbene synthases family.

The catalysed reaction is (E)-4-coumaroyl-CoA + 3 malonyl-CoA + 3 H(+) = 2',4,4',6'-tetrahydroxychalcone + 3 CO2 + 4 CoA. It participates in secondary metabolite biosynthesis; flavonoid biosynthesis. In terms of biological role, the primary product of this enzyme is 4,2',4',6'-tetrahydroxychalcone (also termed naringenin-chalcone or chalcone) which can under specific conditions spontaneously isomerize into naringenin. In Ipomoea cordatotriloba (Tievine), this protein is Chalcone synthase B (CHSB).